Here is a 628-residue protein sequence, read N- to C-terminus: Chaperone protein HtpG (628 aa).

Residues 1-337 form an a; substrate-binding region; sequence MSEKKYTFET…SADLPLNVSR (337 aa). The segment at 338 to 554 is b; sequence EILQHNKVID…DYGMSLHMQK (217 aa). Residues 555 to 628 are c; the sequence is MMEEAGQSFM…FVKLVNKYIR (74 aa).

It belongs to the heat shock protein 90 family. In terms of assembly, homodimer.

The protein localises to the cytoplasm. Its function is as follows. Molecular chaperone. Has ATPase activity. The polypeptide is Chaperone protein HtpG (Francisella tularensis subsp. holarctica (strain FTNF002-00 / FTA)).